Here is a 398-residue protein sequence, read N- to C-terminus: Phosphoglycerate kinase (398 aa).

Residues 21–23 (DFN), Arg-36, 59–62 (HLGR), Arg-119, and Arg-157 each bind substrate. Residues Lys-208, Gly-296, Glu-327, and 354–357 (GGDS) contribute to the ATP site.

It belongs to the phosphoglycerate kinase family. In terms of assembly, monomer.

It localises to the cytoplasm. The catalysed reaction is (2R)-3-phosphoglycerate + ATP = (2R)-3-phospho-glyceroyl phosphate + ADP. Its pathway is carbohydrate degradation; glycolysis; pyruvate from D-glyceraldehyde 3-phosphate: step 2/5. In Streptococcus pneumoniae serotype 4 (strain ATCC BAA-334 / TIGR4), this protein is Phosphoglycerate kinase.